Reading from the N-terminus, the 341-residue chain is GTPase Obg (341 aa).

The 159-residue stretch at 1 to 159 folds into the Obg domain; that stretch reads MKFVDEALIK…RNLRLELRVL (159 aa). The interval 128 to 150 is disordered; the sequence is TRYKSSVNRSPRQTTPGSPGESR. The segment covering 129–144 has biased composition (polar residues); the sequence is RYKSSVNRSPRQTTPG. Positions 160-334 constitute an OBG-type G domain; the sequence is ADVGLLGLPN…LCYALMQLID (175 aa). GTP contacts are provided by residues 166-173, 191-195, 213-216, 283-286, and 315-317; these read GLPNAGKS, FTTLH, DIPG, NKID, and SAI. Residues S173 and T193 each contribute to the Mg(2+) site.

It belongs to the TRAFAC class OBG-HflX-like GTPase superfamily. OBG GTPase family. As to quaternary structure, monomer. Requires Mg(2+) as cofactor.

It is found in the cytoplasm. Functionally, an essential GTPase which binds GTP, GDP and possibly (p)ppGpp with moderate affinity, with high nucleotide exchange rates and a fairly low GTP hydrolysis rate. Plays a role in control of the cell cycle, stress response, ribosome biogenesis and in those bacteria that undergo differentiation, in morphogenesis control. This Legionella pneumophila subsp. pneumophila (strain Philadelphia 1 / ATCC 33152 / DSM 7513) protein is GTPase Obg.